Consider the following 110-residue polypeptide: Antimicrobial peptide microplusin (110 aa).

The signal sequence occupies residues 1-20 (MKAIFVSALLVVALVASTSA). 3 cysteine pairs are disulfide-bonded: Cys-26–Cys-72, Cys-39–Cys-100, and Cys-61–Cys-66.

In terms of tissue distribution, expressed in the hemocytes, fat body and ovaries.

Its subcellular location is the secreted. Has bacteriostatic activity against the Gram-positive bacterium M.luteus, but not against Gram-negative bacterium E.coli SBS363. Has fungistatic activity against C.neoformans, but not C.albicans. Binds and sequesters copper and iron ions. Copper-chelating is crucial for antimicrobial activity against M.luteus. The polypeptide is Antimicrobial peptide microplusin (Rhipicephalus microplus (Cattle tick)).